The sequence spans 124 residues: Large ribosomal subunit protein bL12 (124 aa).

The protein belongs to the bacterial ribosomal protein bL12 family. In terms of assembly, homodimer. Part of the ribosomal stalk of the 50S ribosomal subunit. Forms a multimeric L10(L12)X complex, where L10 forms an elongated spine to which 2 to 4 L12 dimers bind in a sequential fashion. Binds GTP-bound translation factors.

Its function is as follows. Forms part of the ribosomal stalk which helps the ribosome interact with GTP-bound translation factors. Is thus essential for accurate translation. This is Large ribosomal subunit protein bL12 from Borreliella burgdorferi (strain ZS7) (Borrelia burgdorferi).